The following is a 119-amino-acid chain: Ribonuclease P protein component (119 aa).

This sequence belongs to the RnpA family. In terms of assembly, consists of a catalytic RNA component (M1 or rnpB) and a protein subunit.

The enzyme catalyses Endonucleolytic cleavage of RNA, removing 5'-extranucleotides from tRNA precursor.. Its function is as follows. RNaseP catalyzes the removal of the 5'-leader sequence from pre-tRNA to produce the mature 5'-terminus. It can also cleave other RNA substrates such as 4.5S RNA. The protein component plays an auxiliary but essential role in vivo by binding to the 5'-leader sequence and broadening the substrate specificity of the ribozyme. This chain is Ribonuclease P protein component, found in Listeria welshimeri serovar 6b (strain ATCC 35897 / DSM 20650 / CCUG 15529 / CIP 8149 / NCTC 11857 / SLCC 5334 / V8).